We begin with the raw amino-acid sequence, 122 residues long: MAKKGSISSRNLRISDQIQKDLAEMIQRELRDPRLGLVTLQSVALTPDYAHAKVYFTVLGAEAAEAEAILNEKAGYLHSLLYKRLHIHTVPTLRFFHDTSVEHAIEMSKLINEANATRSKDD.

Belongs to the RbfA family. In terms of assembly, monomer. Binds 30S ribosomal subunits, but not 50S ribosomal subunits or 70S ribosomes.

It localises to the cytoplasm. One of several proteins that assist in the late maturation steps of the functional core of the 30S ribosomal subunit. Associates with free 30S ribosomal subunits (but not with 30S subunits that are part of 70S ribosomes or polysomes). Required for efficient processing of 16S rRNA. May interact with the 5'-terminal helix region of 16S rRNA. The chain is Ribosome-binding factor A from Cupriavidus necator (strain ATCC 17699 / DSM 428 / KCTC 22496 / NCIMB 10442 / H16 / Stanier 337) (Ralstonia eutropha).